Here is a 345-residue protein sequence, read N- to C-terminus: tRNA pseudouridine synthase B (345 aa).

Catalysis depends on Asp-39, which acts as the Nucleophile.

The protein belongs to the pseudouridine synthase TruB family. Type 1 subfamily.

The catalysed reaction is uridine(55) in tRNA = pseudouridine(55) in tRNA. Its function is as follows. Responsible for synthesis of pseudouridine from uracil-55 in the psi GC loop of transfer RNAs. The chain is tRNA pseudouridine synthase B from Rickettsia peacockii (strain Rustic).